The following is a 426-amino-acid chain: G2/mitotic-specific cyclin-A (426 aa).

Polar residues predominate over residues 1-11; that stretch reads MSMVHGSSFQI. The interval 1–22 is disordered; that stretch reads MSMVHGSSFQIAQDGENENQGV.

Belongs to the cyclin family. Cyclin AB subfamily.

Its function is as follows. Essential for the control of the cell cycle at the G2/M (mitosis) transition. Interacts with the CDC2 and CDK2 protein kinases to form MPF. G2/M cyclins accumulate steadily during G2 and are abruptly destroyed at mitosis. This chain is G2/mitotic-specific cyclin-A, found in Patella vulgata (Common limpet).